Reading from the N-terminus, the 177-residue chain is Large ribosomal subunit protein uL6 (177 aa).

The protein belongs to the universal ribosomal protein uL6 family. Part of the 50S ribosomal subunit.

Its function is as follows. This protein binds to the 23S rRNA, and is important in its secondary structure. It is located near the subunit interface in the base of the L7/L12 stalk, and near the tRNA binding site of the peptidyltransferase center. The chain is Large ribosomal subunit protein uL6 from Buchnera aphidicola subsp. Acyrthosiphon kondoi (Acyrthosiphon kondoi symbiotic bacterium).